A 269-amino-acid polypeptide reads, in one-letter code: Lck-interacting transmembrane adapter 1 (269 aa).

Over 1 to 7 (MRPPVPS) the chain is Extracellular. A helical; Signal-anchor for type III membrane protein membrane pass occupies residues 8 to 28 (APLALWVLGCFSLLLWLWALC). Residues Cys-28 and Cys-31 are each lipidated (S-palmitoyl cysteine). At 29-269 (TACHRKRAQR…VYESIKEMGL (241 aa)) the chain is on the cytoplasmic side. Residues 102–133 (STRSQVPNSAFPPRQLPRAPPAAPATAPSTSS) form a disordered region. Residues 115-124 (RQLPRAPPAA) show a composition bias toward pro residues. Phosphotyrosine occurs at positions 137, 175, and 207. The segment at 137–140 (YSNV) is interaction with GRB2. 2 interaction with CSK regions span residues 175–178 (YACI) and 207–210 (YSRV). Phosphotyrosine; by LYN or LCK is present on residues Tyr-242 and Tyr-261. The segment at 242–245 (YEAI) is interaction with LCK and PIK3R1. The interval 261–264 (YESI) is interaction with LCK, PLCG2 and PIK3R1. Ser-263 carries the post-translational modification Phosphoserine.

When phosphorylated in response to TCR stimulation and/or CD4 costimulation, interacts with LCK, CSK, FYN, PTPN11/SHP2, GRB2, PIK3R1 and GRAP2. When phosphorylated in response to BCR activation, interacts with LYN, PIK3R1, PLCG2 and GRB2. Palmitoylation of Cys-28 and Cys-31 is required for raft targeting. Post-translationally, phosphorylated on tyrosines upon TCR activation and/or CD4 coreceptor stimulation, or upon BCR stimulation; which leads to the recruitment of SH2-containing proteins. As to expression, expressed in spleen and lung. Present in primary B-cells and peripheral T-cells (at protein level).

Its subcellular location is the cell membrane. Involved in BCR (B-cell antigen receptor)-mediated signaling in B-cells and TCR (T-cell antigen receptor)-mediated T-cell signaling in T-cells. In absence of TCR signaling, may be involved in CD4-mediated inhibition of T-cell activation. Couples activation of these receptors and their associated kinases with distal intracellular events such as calcium mobilization or MAPK activation through the recruitment of PLCG2, GRB2, GRAP2, and other signaling molecules. The polypeptide is Lck-interacting transmembrane adapter 1 (Lime1) (Mus musculus (Mouse)).